The sequence spans 254 residues: Small ribosomal subunit protein uS2 (254 aa).

A disordered region spans residues 225–254 (ALSERKREKDDAKLKEDEESKKASDKAEIQ). The span at 226 to 254 (LSERKREKDDAKLKEDEESKKASDKAEIQ) shows a compositional bias: basic and acidic residues.

The protein belongs to the universal ribosomal protein uS2 family.

In Cytophaga hutchinsonii (strain ATCC 33406 / DSM 1761 / CIP 103989 / NBRC 15051 / NCIMB 9469 / D465), this protein is Small ribosomal subunit protein uS2.